Consider the following 185-residue polypeptide: Coordinator of PRMT5 and differentiation stimulator (185 aa).

An N-acetylmethionine modification is found at methionine 1. The interval 1-109 is disordered; it reads MDPPTAGAQS…MSGCLPKEQA (109 aa). 2 stretches are compositionally biased toward basic and acidic residues: residues 42–52 and 66–77; these read SSQEKATENAT and SPAHGEGTHCEE. At serine 66 the chain carries Phosphoserine. The span at 78-89 shows a compositional bias: acidic residues; it reads EGFAEDDEDSDG.

In terms of assembly, interacts with PRMT5. Interacts with histone H4; specifically interacts with the N-terminus of histone H4 but not with histone H3. Interacts with CBFB. Found in a complex with PRMT5, RUNX1 and CBFB.

The protein resides in the nucleus. In terms of biological role, histone-binding protein required for histone H4 methyltransferase activity of PRMT5. Specifically required for histone H4 'Arg-3' methylation mediated by PRMT5, but not histone H3 'Arg-8' methylation, suggesting that it modulates the substrate specificity of PRMT5. Specifically interacts with the N-terminus of histone H4 but not with histone H3, suggesting that it acts by promoting the association between histone H4 and PRMT5. Involved in CCNE1 promoter repression. Plays a role in muscle cell differentiation by modulating the recruitment of PRMT5 to the promoter of genes involved in the coordination between cell cycle exit and muscle differentiation. The chain is Coordinator of PRMT5 and differentiation stimulator (COPRS) from Bos taurus (Bovine).